We begin with the raw amino-acid sequence, 156 residues long: ATP synthase subunit b (156 aa).

Residues 5-25 form a helical membrane-spanning segment; sequence LTLIGQAIAFAFFVAFCMKFV.

This sequence belongs to the ATPase B chain family. As to quaternary structure, F-type ATPases have 2 components, F(1) - the catalytic core - and F(0) - the membrane proton channel. F(1) has five subunits: alpha(3), beta(3), gamma(1), delta(1), epsilon(1). F(0) has three main subunits: a(1), b(2) and c(10-14). The alpha and beta chains form an alternating ring which encloses part of the gamma chain. F(1) is attached to F(0) by a central stalk formed by the gamma and epsilon chains, while a peripheral stalk is formed by the delta and b chains.

It localises to the cell inner membrane. F(1)F(0) ATP synthase produces ATP from ADP in the presence of a proton or sodium gradient. F-type ATPases consist of two structural domains, F(1) containing the extramembraneous catalytic core and F(0) containing the membrane proton channel, linked together by a central stalk and a peripheral stalk. During catalysis, ATP synthesis in the catalytic domain of F(1) is coupled via a rotary mechanism of the central stalk subunits to proton translocation. Its function is as follows. Component of the F(0) channel, it forms part of the peripheral stalk, linking F(1) to F(0). In Acinetobacter baumannii (strain SDF), this protein is ATP synthase subunit b.